We begin with the raw amino-acid sequence, 485 residues long: RRQYNLSTSPLTSSVATGTNLVLYAAPLSPLLPLQDGTNTHIMATEASNYAQYRVVRATIRYRPLVPNAVGGYAISISFWPQTTTTPTSVDMNSITSTDVRILVQPGIASELVIPSERLHYRNQGWRSVETSGVAEEEATSGLVMLCIHGSPVNSYTNTPYTGALGLLDFALELEFRNLTPGNTNTRVSRYSSTARHRLRRGADGTAELTTTAATRFMKDLYFTSTNGVGEIGRGIALTLFNLADTLLGGLPTELISSAGGQLFYSRPVVSAHGEPTVKLYTSVENAQQDKGIAIPHDIDLGESRVVIQDYDNQHEQDRPTPSPAPSRPFSVLRANDVLWLSLTAAEYDQSTYGSSTAPVYVSDSVTLVNVATGAQAVARSLDWTKVTLDGRPLSTIQQYPKTFFVLPLRGKLSFWEAGTTKAGYPYNYNTTASDQLLVENAAGHRVAISTYTTSLGAGPVSISAVAVLAPHSALALLEDTLDYP.

N-linked (GlcNAc...) asparagine; by host glycans are attached at residues asparagine 5 and asparagine 178. Residues 236-262 are particle formation; that stretch reads IALTLFNLADTLLGGLPTELISSAGGQ. Asparagine 430 carries N-linked (GlcNAc...) asparagine; by host glycosylation. Residues 453–478 are oligomerization; sequence TTSLGAGPVSISAVAVLAPHSALALL.

The protein belongs to the hepevirus capsid protein family. As to quaternary structure, self-assembles to form the capsid. The capsid is dominated by dimers that define the 30 morphological units. Interacts with phosphorylated protein ORF3. Interacts with host TMEM134. Interacts with host ASGR1 and ASGR2; these interactions facilitate infection of host hepatocytes. Post-translationally, not N-glycosylated.

Its subcellular location is the virion. The protein localises to the host cytoplasm. It localises to the host endoplasmic reticulum. It is found in the host Golgi apparatus. The protein resides in the host cell surface. Its subcellular location is the host nucleus. Forms an icosahedral capsid with a T=1 symmetry and a 34 nm diameter. The capsid is composed of 60 copies linked to each other. Binds to the 5' end of the genomic RNA to mediate genome encapsidation. Binds to heparin surface proteoglycans (HSPGs) to mediate viral entry. Additionally, the interactions with host ASGR1 and ASGR2 facilitate viral infection of hepatocytes. Inhibits IFN production by blocking host TBK1-induced IRF3 phosphorylation. The nuclear form probably modulates host gene expression. The sequence is that of Caspid protein from Hepatitis E virus (isolate Rhesus/HT-4) (HEV).